The primary structure comprises 420 residues: FLYWCH transcription factor 3 (420 aa).

Positions 87 to 104 (SSTSPDSQPSSSSSVMSS) are enriched in low complexity. Disordered stretches follow at residues 87-107 (SSTS…STDE) and 119-138 (KINK…YTPR). Polar residues predominate over residues 123-134 (AQRQSSPNSSKP). The FLYWCH-type zinc-finger motif lies at 140-195 (IRERVLFDEHLYVFDKCSYDSKKRFFRCERKNTCPARIHTPFDAERVIHKVQVHNH).

Functionally, probable transcription factor. May bind to the promoters of target genes, including micro-RNA genes, in order to repress expression, and acting redundantly with flh-2. This chain is FLYWCH transcription factor 3, found in Caenorhabditis elegans.